We begin with the raw amino-acid sequence, 153 residues long: SsrA-binding protein (153 aa).

Positions 131–153 (EYDKRDSIRERDDRREMDRAFKR) are disordered.

It belongs to the SmpB family.

Its subcellular location is the cytoplasm. In terms of biological role, required for rescue of stalled ribosomes mediated by trans-translation. Binds to transfer-messenger RNA (tmRNA), required for stable association of tmRNA with ribosomes. tmRNA and SmpB together mimic tRNA shape, replacing the anticodon stem-loop with SmpB. tmRNA is encoded by the ssrA gene; the 2 termini fold to resemble tRNA(Ala) and it encodes a 'tag peptide', a short internal open reading frame. During trans-translation Ala-aminoacylated tmRNA acts like a tRNA, entering the A-site of stalled ribosomes, displacing the stalled mRNA. The ribosome then switches to translate the ORF on the tmRNA; the nascent peptide is terminated with the 'tag peptide' encoded by the tmRNA and targeted for degradation. The ribosome is freed to recommence translation, which seems to be the essential function of trans-translation. The sequence is that of SsrA-binding protein from Parabacteroides distasonis (strain ATCC 8503 / DSM 20701 / CIP 104284 / JCM 5825 / NCTC 11152).